A 291-amino-acid chain; its full sequence is Glutathione S-transferase 2 (291 aa).

The GST N-terminal domain occupies 2–83; it reads SPVKVFGHPM…YILRKYGGTA (82 aa). Residues 41–42, 54–55, and 67–68 each bind glutathione; these read HK, KM, and KS. In terms of domain architecture, GST C-terminal spans 93–223; it reads GIEELAMVDV…RVCKHMPTEF (131 aa).

The protein belongs to the GST superfamily. Phi family.

The catalysed reaction is RX + glutathione = an S-substituted glutathione + a halide anion + H(+). In terms of biological role, conjugation of reduced glutathione to a wide number of exogenous and endogenous hydrophobic electrophiles. This chain is Glutathione S-transferase 2 (GSTA2), found in Triticum aestivum (Wheat).